A 196-amino-acid chain; its full sequence is Recombination protein RecR (196 aa).

A C4-type zinc finger spans residues 56 to 71; sequence CPVCGGLDSQQPCMIC. The 95-residue stretch at 78-172 folds into the Toprim domain; it reads PLICVVETVA…SVTRLAQGVP (95 aa).

Belongs to the RecR family.

In terms of biological role, may play a role in DNA repair. It seems to be involved in an RecBC-independent recombinational process of DNA repair. It may act with RecF and RecO. The sequence is that of Recombination protein RecR from Acidiphilium cryptum (strain JF-5).